Reading from the N-terminus, the 514-residue chain is 2-isopropylmalate synthase (514 aa).

Residues 8-270 (IRIFDTTLRD…DCGVVTEQLF (263 aa)) enclose the Pyruvate carboxyltransferase domain. Positions 17, 205, 207, and 241 each coordinate Mn(2+). Residues 394 to 514 (RLVNLSVQCS…KEEEQEKEGI (121 aa)) form a regulatory domain region.

It belongs to the alpha-IPM synthase/homocitrate synthase family. LeuA type 1 subfamily. In terms of assembly, homodimer. It depends on Mn(2+) as a cofactor.

Its subcellular location is the cytoplasm. It catalyses the reaction 3-methyl-2-oxobutanoate + acetyl-CoA + H2O = (2S)-2-isopropylmalate + CoA + H(+). It functions in the pathway amino-acid biosynthesis; L-leucine biosynthesis; L-leucine from 3-methyl-2-oxobutanoate: step 1/4. Its function is as follows. Catalyzes the condensation of the acetyl group of acetyl-CoA with 3-methyl-2-oxobutanoate (2-ketoisovalerate) to form 3-carboxy-3-hydroxy-4-methylpentanoate (2-isopropylmalate). This chain is 2-isopropylmalate synthase, found in Nitratidesulfovibrio vulgaris (strain DSM 19637 / Miyazaki F) (Desulfovibrio vulgaris).